The sequence spans 82 residues: Zinc finger CCCH domain-containing protein 13 (82 aa).

2 C3H1-type zinc fingers span residues 9 to 37 (RPGE…HPKN) and 55 to 82 (RPGQ…DHFT).

The chain is Zinc finger CCCH domain-containing protein 13 from Arabidopsis thaliana (Mouse-ear cress).